The primary structure comprises 234 residues: MAHVAKKYKAAAEKVDRTKRYKLDEAMSLVKQTATKKFDETVDASINLGVDPKHADQVVRGAVVLPHGMGKTVRLAVFAKGDKAKEAQEAGADIVGAEDLAEKIQGGFMDFDKLIATPDMMGVVGRLGKILGPRGLMPNPKVGTVTMDLARAVKEQKAGKVEFRVEKAGIVHVPFGKASFDPDKLKANFSAIMEVIYKAKPQTAKGVYVKNVTLSTTMGPGIKVDLAELAAQHA.

The protein belongs to the universal ribosomal protein uL1 family. In terms of assembly, part of the 50S ribosomal subunit.

Binds directly to 23S rRNA. The L1 stalk is quite mobile in the ribosome, and is involved in E site tRNA release. In terms of biological role, protein L1 is also a translational repressor protein, it controls the translation of the L11 operon by binding to its mRNA. In Anaeromyxobacter dehalogenans (strain 2CP-1 / ATCC BAA-258), this protein is Large ribosomal subunit protein uL1.